The primary structure comprises 340 residues: Fructoselysine 6-phosphate deglycase (340 aa).

2 SIS domains span residues 35–169 (IVEE…RLAP) and 201–331 (LGEL…PDER).

As to quaternary structure, homododecamer.

The enzyme catalyses N(6)-(6-phospho-D-fructosyl)-L-lysine + H2O = D-glucose 6-phosphate + L-lysine. Its pathway is carbohydrate metabolism; fructoselysine degradation; D-glucose 6-phosphate and lysine from fructoselysine: step 2/2. Catalyzes the reversible conversion of fructoselysine 6-phosphate to glucose 6-phosphate and lysine. Functions in a fructoselysine degradation pathway that allows E.coli to grow on fructoselysine or psicoselysine. This chain is Fructoselysine 6-phosphate deglycase (frlB), found in Escherichia coli O157:H7.